A 168-amino-acid chain; its full sequence is uncharacterized protein (168 aa).

One can recognise an HTH asnC-type domain in the interval 19–80 (LDKLDRHILN…VVSPKAVGRT (62 aa)). The H-T-H motif DNA-binding region spans 38-57 (LKELSEKVNSSVATCQRRVQ).

This is an uncharacterized protein from Haemophilus influenzae (strain ATCC 51907 / DSM 11121 / KW20 / Rd).